The following is a 241-amino-acid chain: Small ribosomal subunit protein bS6 (241 aa).

Over residues 97–108 the composition is skewed to basic residues; it reads KPKIRERNRKYT. Disordered regions lie at residues 97 to 187 and 199 to 241; these read KPKI…HREN and NKNH…QSSN. A compositionally biased stretch (basic and acidic residues) spans 109–118; sequence PRRDRFDKPN. Low complexity-rich tracts occupy residues 130 to 151, 161 to 180, and 199 to 210; these read QDQQ…QTSQ, DDFQ…QQNQ, and NKNHQNQTSQTQ.

The protein belongs to the bacterial ribosomal protein bS6 family.

Binds together with bS18 to 16S ribosomal RNA. The protein is Small ribosomal subunit protein bS6 of Mesomycoplasma hyopneumoniae (strain 7448) (Mycoplasma hyopneumoniae).